A 469-amino-acid polypeptide reads, in one-letter code: Glutamate--tRNA ligase (469 aa).

A 'HIGH' region motif is present at residues 11–21; the sequence is PSPTGFIHLGN. A compositionally biased stretch (basic and acidic residues) spans 118–131; sequence GEKPRYDGTWRPEP. Residues 118 to 138 form a disordered region; that stretch reads GEKPRYDGTWRPEPGKVLPEP. The 'KMSKS' region signature appears at 243–247; it reads KMSKR. Lys246 is a binding site for ATP.

Belongs to the class-I aminoacyl-tRNA synthetase family. Glutamate--tRNA ligase type 1 subfamily. As to quaternary structure, monomer.

The protein resides in the cytoplasm. It carries out the reaction tRNA(Glu) + L-glutamate + ATP = L-glutamyl-tRNA(Glu) + AMP + diphosphate. Functionally, catalyzes the attachment of glutamate to tRNA(Glu) in a two-step reaction: glutamate is first activated by ATP to form Glu-AMP and then transferred to the acceptor end of tRNA(Glu). In Burkholderia thailandensis (strain ATCC 700388 / DSM 13276 / CCUG 48851 / CIP 106301 / E264), this protein is Glutamate--tRNA ligase.